The sequence spans 260 residues: Rhythmically expressed gene 2 protein (260 aa).

In Drosophila melanogaster (Fruit fly), this protein is Rhythmically expressed gene 2 protein (Reg-2).